Consider the following 148-residue polypeptide: Glyoxalase domain-containing protein 5 (148 aa).

One can recognise a VOC domain in the interval 25-145 (RLDHIVMTVK…DRNLLEVSSY (121 aa)).

Belongs to the glyoxalase I family.

This is Glyoxalase domain-containing protein 5 (Glod5) from Mus musculus (Mouse).